The following is a 273-amino-acid chain: Homeobox protein ceh-43 (273 aa).

Disordered regions lie at residues 47–79 (NGAT…EEAF) and 153–204 (RRSK…LVSS). The segment at residues 102 to 161 (MRKPRTIYNSSQLQMLQKKFQKTQYLALPDRAALAHELGLSQTQVKIWFQNRRSKQKKQK) is a DNA-binding region (homeobox).

The protein belongs to the distal-less homeobox family. Predominantly expressed in the head hypdodermis, neuronal support cells and CAN neurons.

It is found in the nucleus. Its function is as follows. Probable transcription factor. Binds to the sequence motif 5'-ATAAT-3' in regulatory elements. Required for development of the anterior hypodermis during embryonic morphogenesis for cell adhesion; also affects embryonic and larval viability. Modulates and maintains dopaminergic neuron differentiation. May activate dopamine pathway genes in concert with ETS domain-containing protein ast-1, and homeobox proteins ceh-40 and ceh-20. This Caenorhabditis elegans protein is Homeobox protein ceh-43 (ceh-43).